Consider the following 693-residue polypeptide: Follicle-stimulating hormone receptor (693 aa).

Residues 1–18 (MFLVFTCSLILLASCSSC) form the signal peptide. Intrachain disulfides connect Cys-18/Cys-25 and Cys-23/Cys-32. In terms of domain architecture, LRRNT spans 19–46 (QHHTCHCAGRIFICQESKVVQLPRDIPT). Residues 19–366 (QHHTCHCAGR…EDIMGYTILR (348 aa)) are Extracellular-facing. Asn-47 is a glycosylation site (N-linked (GlcNAc...) asparagine). 9 LRR repeats span residues 49 to 72 (TELR…LLDL), 73 to 97 (EKIE…LPKL), 98 to 118 (HEIR…AFQH), 119 to 143 (LPSL…KVHS), 144 to 169 (FQKV…MGLS), 170 to 192 (SESV…AFNG), 193 to 216 (TYLD…VFQG), 217 to 240 (ANGP…GLEL), and 241 to 259 (IKKL…PDLS). N-linked (GlcNAc...) asparagine glycosylation is found at Asn-191 and Asn-199. Asn-268 is a glycosylation site (N-linked (GlcNAc...) asparagine). 4 cysteine pairs are disulfide-bonded: Cys-275–Cys-346, Cys-276–Cys-292, Cys-276–Cys-356, and Cys-292–Cys-338. The chain crosses the membrane as a helical span at residues 367-387 (VLIWFISILAITGNIVVLIIL). Topologically, residues 388 to 398 (ISSQYKLTVPR) are cytoplasmic. A helical transmembrane segment spans residues 399 to 421 (FLMCNLAFADLCIGIYLLFIASV). Topologically, residues 422-443 (DIQTKSQYYNYAIDWQTGAGCN) are extracellular. Cys-442 and Cys-517 are disulfide-bonded. The helical transmembrane segment at 444-465 (AAGFFTVFASELSVYTLTVITL) threads the bilayer. Residues 466 to 485 (ERWHTITYAMQLDRKVRFRH) lie on the Cytoplasmic side of the membrane. Residues 486–508 (AVIIMIFGWMFAFTVALLPIFGV) traverse the membrane as a helical segment. Over 509-528 (SSYMKVSICLPMDIETPFSQ) the chain is Extracellular. Residues 529 to 550 (AYVIFLLVLNVLAFVIICACYI) form a helical membrane-spanning segment. Over 551 to 573 (CIYFTVRNPNVISSNSDTKIAKR) the chain is Cytoplasmic. The chain crosses the membrane as a helical span at residues 574–597 (MAILIFTDFLCMAPISFFAISASL). The Extracellular portion of the chain corresponds to 598-608 (KVPLITVSKSK). A helical transmembrane segment spans residues 609 to 630 (ILLVLFYPINSCANPFLYAIFT). Topologically, residues 631–693 (KTFRRDFFIL…YSLVPLNHLN (63 aa)) are cytoplasmic.

The protein belongs to the G-protein coupled receptor 1 family. FSH/LSH/TSH subfamily. Homotrimer. Functions as a homotrimer binding the FSH hormone heterodimer composed of CGA and FSHB.

It is found in the cell membrane. In terms of biological role, g protein-coupled receptor for follitropin, the follicle-stimulating hormone. Through cAMP production activates the downstream PI3K-AKT and ERK1/ERK2 signaling pathways. The sequence is that of Follicle-stimulating hormone receptor (FSHR) from Cairina moschata (Muscovy duck).